Consider the following 242-residue polypeptide: MKILIPTAKEMNTDLPSIEAIPLKPESQTVLDALALYSASQLESFYKVSAEKAAEEFQNIQALKRQTAQHYPALKLFDGLMYRNIKRDKLTEAEQDYLENHVFITSALYGVVPALSPMAPHRLDFLMKLKVVGKTLKSHWKAVYDEALKKEEVIFSLLSSEFETVFSKEIRAKMVTFKFMEDRGGQLKIHSTISKKARGAFLTALIENQVQTVGEARRLNFAGFVYREDLSQPQGLVFVKEV.

It belongs to the UPF0246 family.

The sequence is that of UPF0246 protein SP70585_1589 from Streptococcus pneumoniae (strain 70585).